We begin with the raw amino-acid sequence, 130 residues long: Modulator protein MzrA (130 aa).

Over 1-15 (MIAAFIKRHAPQRRL) the chain is Cytoplasmic. A helical transmembrane segment spans residues 16–36 (SLWLALPVVALLALVMMPALF). The Periplasmic portion of the chain corresponds to 37 to 130 (RHDSALQIRA…RISFKPQSIG (94 aa)).

Belongs to the MzrA family. Interacts with EnvZ.

The protein localises to the cell inner membrane. Functionally, modulates the activity of the EnvZ/OmpR two-component regulatory system, probably by directly modulating EnvZ enzymatic activity and increasing stability of phosphorylated OmpR. The chain is Modulator protein MzrA from Erwinia tasmaniensis (strain DSM 17950 / CFBP 7177 / CIP 109463 / NCPPB 4357 / Et1/99).